The following is a 700-amino-acid chain: Acetyl-coenzyme A carboxylase carboxyl transferase subunit beta, chloroplastic (700 aa).

Residues C34, C37, C53, and C56 each coordinate Zn(2+). The segment at 34–56 (CENCETLIYKKSLLEQKGVCAEC) adopts a C4-type zinc-finger fold. One can recognise a CoA carboxyltransferase N-terminal domain in the interval 445-700 (KKGRDTKDTE…ETIEIYMYGD (256 aa)).

It belongs to the AccD/PCCB family. In terms of assembly, acetyl-CoA carboxylase is a heterohexamer composed of biotin carboxyl carrier protein, biotin carboxylase and 2 subunits each of ACCase subunit alpha and ACCase plastid-coded subunit beta (accD). It depends on Zn(2+) as a cofactor.

It localises to the plastid. It is found in the chloroplast stroma. It carries out the reaction N(6)-carboxybiotinyl-L-lysyl-[protein] + acetyl-CoA = N(6)-biotinyl-L-lysyl-[protein] + malonyl-CoA. It functions in the pathway lipid metabolism; malonyl-CoA biosynthesis; malonyl-CoA from acetyl-CoA: step 1/1. Component of the acetyl coenzyme A carboxylase (ACC) complex. Biotin carboxylase (BC) catalyzes the carboxylation of biotin on its carrier protein (BCCP) and then the CO(2) group is transferred by the transcarboxylase to acetyl-CoA to form malonyl-CoA. The polypeptide is Acetyl-coenzyme A carboxylase carboxyl transferase subunit beta, chloroplastic (Cryptomeria japonica (Japanese cedar)).